Reading from the N-terminus, the 359-residue chain is Phospho-N-acetylmuramoyl-pentapeptide-transferase (359 aa).

10 helical membrane-spanning segments follow: residues 3 to 23 (QILI…PALI), 55 to 75 (VAII…GLAF), 80 to 100 (ISAS…VGFL), 117 to 137 (TAKT…ALGF), 156 to 176 (IATV…VVSA), 187 to 207 (LDGL…LITF), 231 to 251 (LAIV…WNAA), 255 to 275 (IFMG…ISVT), 280 to 300 (ILAV…VLQI), and 334 to 354 (FWLL…GEWL).

It belongs to the glycosyltransferase 4 family. MraY subfamily. Mg(2+) serves as cofactor.

The protein localises to the cell membrane. It catalyses the reaction UDP-N-acetyl-alpha-D-muramoyl-L-alanyl-gamma-D-glutamyl-meso-2,6-diaminopimeloyl-D-alanyl-D-alanine + di-trans,octa-cis-undecaprenyl phosphate = di-trans,octa-cis-undecaprenyl diphospho-N-acetyl-alpha-D-muramoyl-L-alanyl-D-glutamyl-meso-2,6-diaminopimeloyl-D-alanyl-D-alanine + UMP. It participates in cell wall biogenesis; peptidoglycan biosynthesis. Catalyzes the initial step of the lipid cycle reactions in the biosynthesis of the cell wall peptidoglycan: transfers peptidoglycan precursor phospho-MurNAc-pentapeptide from UDP-MurNAc-pentapeptide onto the lipid carrier undecaprenyl phosphate, yielding undecaprenyl-pyrophosphoryl-MurNAc-pentapeptide, known as lipid I. The polypeptide is Phospho-N-acetylmuramoyl-pentapeptide-transferase (Mycobacterium avium (strain 104)).